We begin with the raw amino-acid sequence, 235 residues long: Large ribosomal subunit protein uL3 (235 aa).

This sequence belongs to the universal ribosomal protein uL3 family. As to quaternary structure, part of the 50S ribosomal subunit. Forms a cluster with proteins L14 and L19.

Its function is as follows. One of the primary rRNA binding proteins, it binds directly near the 3'-end of the 23S rRNA, where it nucleates assembly of the 50S subunit. In Frankia casuarinae (strain DSM 45818 / CECT 9043 / HFP020203 / CcI3), this protein is Large ribosomal subunit protein uL3.